The primary structure comprises 264 residues: Probable DNA polymerase sliding clamp 2 (264 aa).

The DNA-binding element occupies 75–94 (SIAQEATVGIKISNFVRILD).

The protein belongs to the PCNA family.

In terms of biological role, sliding clamp subunit. Responsible for tethering the catalytic subunit of DNA polymerase to DNA during high-speed replication. This is Probable DNA polymerase sliding clamp 2 from Paramecium bursaria Chlorella virus 1 (PBCV-1).